A 218-amino-acid polypeptide reads, in one-letter code: LexA repressor (218 aa).

Positions 28-48 (RAEIAAEFGFSSPNAAEEHLR) form a DNA-binding region, H-T-H motif. Active-site for autocatalytic cleavage activity residues include Ser136 and Lys173.

It belongs to the peptidase S24 family. As to quaternary structure, homodimer.

It catalyses the reaction Hydrolysis of Ala-|-Gly bond in repressor LexA.. Functionally, represses a number of genes involved in the response to DNA damage (SOS response), including recA and lexA. In the presence of single-stranded DNA, RecA interacts with LexA causing an autocatalytic cleavage which disrupts the DNA-binding part of LexA, leading to derepression of the SOS regulon and eventually DNA repair. The protein is LexA repressor of Cupriavidus pinatubonensis (strain JMP 134 / LMG 1197) (Cupriavidus necator (strain JMP 134)).